Reading from the N-terminus, the 351-residue chain is Heat shock factor protein HSF30 (351 aa).

A DNA-binding region spans residues 29–123 (PPPFLSKTYE…LLKTIKRRRN (95 aa)).

It belongs to the HSF family. Homotrimer. In terms of processing, exhibits temperature-dependent phosphorylation.

Its subcellular location is the nucleus. DNA-binding protein that specifically binds heat shock promoter elements (HSE) and activates transcription. This chain is Heat shock factor protein HSF30 (HSF30), found in Solanum peruvianum (Peruvian tomato).